The primary structure comprises 3919 residues: Intermembrane lipid transfer protein Vps13D (3919 aa).

Positions 4–114 constitute a Chorein N-terminal domain; sequence DLITWVLNTY…QDLEYKLAVL (111 aa). The segment at 706–736 is disordered; that stretch reads TSDDDETYLTPCSTPPASEKSGSESPTLLEN. In terms of domain architecture, UBA spans 2292-2334; it reads KADSDLEKAAPLVAMGFEISDCLYAMQINNWRINDAAIWLSQQ. The region spanning 2837–3113 is the SHR-BD domain; sequence ELYISAPVWI…YVMDDPLGQQ (277 aa). The segment at 3749–3768 is disordered; it reads VRETSRDSHRNAPERKRLPR. Over residues 3751–3764 the composition is skewed to basic and acidic residues; it reads ETSRDSHRNAPERK.

The protein belongs to the VPS13 family. Expressed in intestinal cells (at protein level).

It localises to the cytoplasm. It is found in the lysosome. Functionally, mediates the transfer of lipids between membranes at organelle contact sites. Functions in promoting mitochondrial clearance by mitochondrial autophagy (mitophagy), also possibly by positively regulating mitochondrial fission. Mitophagy plays an important role in regulating cell health and mitochondrial size and homeostasis. This chain is Intermembrane lipid transfer protein Vps13D, found in Drosophila melanogaster (Fruit fly).